The following is a 323-amino-acid chain: Calcium homeostasis modulator protein 2 (323 aa).

Over M1–V21 the chain is Cytoplasmic. The segment at L14 to F39 is central pore. Residues M22–A43 traverse the membrane as a helical segment. Residues F44 to R52 are Extracellular-facing. Cystine bridges form between C46/C130 and C48/C162. The chain crosses the membrane as a helical span at residues N53–N76. Residues N77–L101 lie on the Cytoplasmic side of the membrane. A helical transmembrane segment spans residues L102–L132. Residues S133–R179 are Extracellular-facing. The hemichannel docking stretch occupies residues E145 to H152. The helical transmembrane segment at L180 to K206 threads the bilayer. Over H207–S323 the chain is Cytoplasmic. An intersubunit interaction region spans residues Y214 to F251.

This sequence belongs to the CALHM family. As to quaternary structure, homo-undecamer. Two undecameric hemichannels can assemble in a head-to-head manner to form a gap junction. As to expression, placenta.

Its subcellular location is the cell membrane. The catalysed reaction is ATP(in) = ATP(out). Inhibited by Ca(2+) and ruthenium red in a voltage-dependent way. Its function is as follows. Pore-forming subunit of Ca(2+) homeostasis modulator channels. Mediates ATP release from astrocytes and ATP-induced Ca(2+) influx in microglia thus regulating neuronal ATP and Ca(2+) homeostasis, synaptic transmission and neuroinflammatory response. May form intercellular gap junctions. The gating mechanism remains unknown. This is Calcium homeostasis modulator protein 2 from Homo sapiens (Human).